The primary structure comprises 601 residues: 4-hydroxy-3-methylbut-2-en-1-yl diphosphate synthase (flavodoxin) (601 aa).

The [4Fe-4S] cluster site is built by cysteine 507, cysteine 510, cysteine 542, and glutamate 549.

Belongs to the IspG family. [4Fe-4S] cluster is required as a cofactor.

The enzyme catalyses (2E)-4-hydroxy-3-methylbut-2-enyl diphosphate + oxidized [flavodoxin] + H2O + 2 H(+) = 2-C-methyl-D-erythritol 2,4-cyclic diphosphate + reduced [flavodoxin]. It functions in the pathway isoprenoid biosynthesis; isopentenyl diphosphate biosynthesis via DXP pathway; isopentenyl diphosphate from 1-deoxy-D-xylulose 5-phosphate: step 5/6. In terms of biological role, converts 2C-methyl-D-erythritol 2,4-cyclodiphosphate (ME-2,4cPP) into 1-hydroxy-2-methyl-2-(E)-butenyl 4-diphosphate. The chain is 4-hydroxy-3-methylbut-2-en-1-yl diphosphate synthase (flavodoxin) from Chlamydia muridarum (strain MoPn / Nigg).